An 862-amino-acid chain; its full sequence is Leucine--tRNA ligase (862 aa).

The 'HIGH' region motif lies at 44–54 (PYPSGRIHMGH). A 'KMSKS' region motif is present at residues 622-626 (KMSKS). Lys-625 is an ATP binding site.

Belongs to the class-I aminoacyl-tRNA synthetase family.

The protein resides in the cytoplasm. The catalysed reaction is tRNA(Leu) + L-leucine + ATP = L-leucyl-tRNA(Leu) + AMP + diphosphate. This chain is Leucine--tRNA ligase, found in Rhodospirillum rubrum (strain ATCC 11170 / ATH 1.1.1 / DSM 467 / LMG 4362 / NCIMB 8255 / S1).